We begin with the raw amino-acid sequence, 946 residues long: Bifunctional glutamine synthetase adenylyltransferase/adenylyl-removing enzyme (946 aa).

The adenylyl removase stretch occupies residues 1–440 (MKPLSSPLQQ…VFNELIGDDE (440 aa)). Residues 449 to 946 (SEHWRELWQD…ASWQKWLVAG (498 aa)) are adenylyl transferase.

Belongs to the GlnE family. The cofactor is Mg(2+).

It catalyses the reaction [glutamine synthetase]-O(4)-(5'-adenylyl)-L-tyrosine + phosphate = [glutamine synthetase]-L-tyrosine + ADP. It carries out the reaction [glutamine synthetase]-L-tyrosine + ATP = [glutamine synthetase]-O(4)-(5'-adenylyl)-L-tyrosine + diphosphate. In terms of biological role, involved in the regulation of glutamine synthetase GlnA, a key enzyme in the process to assimilate ammonia. When cellular nitrogen levels are high, the C-terminal adenylyl transferase (AT) inactivates GlnA by covalent transfer of an adenylyl group from ATP to specific tyrosine residue of GlnA, thus reducing its activity. Conversely, when nitrogen levels are low, the N-terminal adenylyl removase (AR) activates GlnA by removing the adenylyl group by phosphorolysis, increasing its activity. The regulatory region of GlnE binds the signal transduction protein PII (GlnB) which indicates the nitrogen status of the cell. This chain is Bifunctional glutamine synthetase adenylyltransferase/adenylyl-removing enzyme, found in Citrobacter koseri (strain ATCC BAA-895 / CDC 4225-83 / SGSC4696).